The primary structure comprises 240 residues: Phosphoribosylaminoimidazole-succinocarboxamide synthase (240 aa).

Belongs to the SAICAR synthetase family.

The enzyme catalyses 5-amino-1-(5-phospho-D-ribosyl)imidazole-4-carboxylate + L-aspartate + ATP = (2S)-2-[5-amino-1-(5-phospho-beta-D-ribosyl)imidazole-4-carboxamido]succinate + ADP + phosphate + 2 H(+). It functions in the pathway purine metabolism; IMP biosynthesis via de novo pathway; 5-amino-1-(5-phospho-D-ribosyl)imidazole-4-carboxamide from 5-amino-1-(5-phospho-D-ribosyl)imidazole-4-carboxylate: step 1/2. This is Phosphoribosylaminoimidazole-succinocarboxamide synthase from Wolbachia sp. subsp. Brugia malayi (strain TRS).